The primary structure comprises 86 residues: EMBRYO SURROUNDING FACTOR 1-like protein 2 (86 aa).

The N-terminal stretch at 1-21 (MKSHIAIICIIMLSFFSMHEY) is a signal peptide. Disulfide bonds link Cys-39–Cys-54, Cys-44–Cys-82, Cys-52–Cys-78, and Cys-55–Cys-65.

This sequence belongs to the MEG family.

This Arabidopsis thaliana (Mouse-ear cress) protein is EMBRYO SURROUNDING FACTOR 1-like protein 2 (ESFL2).